The chain runs to 87 residues: Exodeoxyribonuclease 7 small subunit (87 aa).

This sequence belongs to the XseB family. As to quaternary structure, heterooligomer composed of large and small subunits.

The protein resides in the cytoplasm. It carries out the reaction Exonucleolytic cleavage in either 5'- to 3'- or 3'- to 5'-direction to yield nucleoside 5'-phosphates.. In terms of biological role, bidirectionally degrades single-stranded DNA into large acid-insoluble oligonucleotides, which are then degraded further into small acid-soluble oligonucleotides. This Serratia proteamaculans (strain 568) protein is Exodeoxyribonuclease 7 small subunit.